The following is a 579-amino-acid chain: Cytochrome P450 monooxygenase ORF6 (579 aa).

N-linked (GlcNAc...) asparagine glycosylation is present at Asn-2. A helical transmembrane segment spans residues 7–29 (PLGSFVGTTLLLFILYKLVKLAY). N-linked (GlcNAc...) asparagine glycosylation is found at Asn-194 and Asn-390. Heme is bound at residue Cys-512.

Belongs to the cytochrome P450 family. Requires heme as cofactor.

It localises to the membrane. It functions in the pathway sesquiterpene biosynthesis. Its function is as follows. Cytochrome P450 monooxygenase; part of the gene cluster that mediates the biosynthesis of PR-toxin, a bicyclic sesquiterpene belonging to the eremophilane class and acting as a mycotoxin. The first step of the pathway is catalyzed by the aristolochene synthase which performs the cyclization of trans,trans-farnesyl diphosphate (FPP) to the bicyclic sesquiterpene aristolochene. Following the formation of aristolochene, the non-oxygenated aristolochene is converted to the trioxygenated intermediate eremofortin B, via 7-epi-neopetasone. This conversion appears to involve three enzymes, a hydroxysterol oxidase-like enzyme, the quinone-oxidase prx3 that forms the quinone-type-structure in the bicyclic nucleus of aristolochene with the C8-oxo group and the C-3 hydroxyl group, and the P450 monooxygenase ORF6 that introduces the epoxide at the double bond between carbons 1 and 2. No monoxy or dioxy-intermediates have been reported to be released to the broth, so these three early oxidative reactions may be coupled together. Eremofortin B is further oxidized by another P450 monooxygenase, that introduces a second epoxide between carbons 7 and 11 prior to acetylation to eremofortin A by the acetyltransferase ORF8. The second epoxidation may be performed by a second P450 monooxygenase. After the acetylation step, eremofortin A is converted to eremofortin C and then to PR-toxin. First the conversion of eremofortin A to eremofortin C proceeds by oxidation of the side chain of the molecule at C-12 and is catalyzed by the short-chain oxidoreductase prx1. The cytochrome P450 monooxygenase ORF6 is probably also involved in this step. The primary alcohol formed at C-12 is finally oxidized by the short-chain alcohol dehydrogenase prx4 that forms PR-toxin. The chain is Cytochrome P450 monooxygenase ORF6 from Penicillium roqueforti (strain FM164).